We begin with the raw amino-acid sequence, 336 residues long: Electron transfer flavoprotein subunit alpha (336 aa).

275–303 (LYIACGISGAIQHLAGMQDSDYIIAINKD) is an FAD binding site.

The protein belongs to the ETF alpha-subunit/FixB family. In terms of assembly, heterodimer of an alpha and a beta subunit. FAD is required as a cofactor.

In terms of biological role, the electron transfer flavoprotein serves as a specific electron acceptor for other dehydrogenases. It transfers the electrons to the main respiratory chain via ETF-ubiquinone oxidoreductase (ETF dehydrogenase). The protein is Electron transfer flavoprotein subunit alpha (etfA) of Clostridium acetobutylicum (strain ATCC 824 / DSM 792 / JCM 1419 / IAM 19013 / LMG 5710 / NBRC 13948 / NRRL B-527 / VKM B-1787 / 2291 / W).